The chain runs to 299 residues: tRNA-cytidine(32) 2-sulfurtransferase (299 aa).

The PP-loop motif motif lies at 56–61 (SGGKDS). C131, C134, and C222 together coordinate [4Fe-4S] cluster.

It belongs to the TtcA family. In terms of assembly, homodimer. Mg(2+) is required as a cofactor. The cofactor is [4Fe-4S] cluster.

It localises to the cytoplasm. It catalyses the reaction cytidine(32) in tRNA + S-sulfanyl-L-cysteinyl-[cysteine desulfurase] + AH2 + ATP = 2-thiocytidine(32) in tRNA + L-cysteinyl-[cysteine desulfurase] + A + AMP + diphosphate + H(+). It participates in tRNA modification. In terms of biological role, catalyzes the ATP-dependent 2-thiolation of cytidine in position 32 of tRNA, to form 2-thiocytidine (s(2)C32). The sulfur atoms are provided by the cysteine/cysteine desulfurase (IscS) system. In Xylella fastidiosa (strain M23), this protein is tRNA-cytidine(32) 2-sulfurtransferase.